A 114-amino-acid chain; its full sequence is Ribonuclease P protein component (114 aa).

It belongs to the RnpA family. Consists of a catalytic RNA component (M1 or rnpB) and a protein subunit.

The catalysed reaction is Endonucleolytic cleavage of RNA, removing 5'-extranucleotides from tRNA precursor.. In terms of biological role, RNaseP catalyzes the removal of the 5'-leader sequence from pre-tRNA to produce the mature 5'-terminus. It can also cleave other RNA substrates such as 4.5S RNA. The protein component plays an auxiliary but essential role in vivo by binding to the 5'-leader sequence and broadening the substrate specificity of the ribozyme. This is Ribonuclease P protein component from Staphylococcus haemolyticus (strain JCSC1435).